The sequence spans 1216 residues: Histone-lysine N-methyltransferase SETDB1-B (1216 aa).

A coiled-coil region spans residues 38 to 61; that stretch reads KADLEQLQEWVEQREKEVADIDAL. 2 consecutive Tudor domains span residues 266–329 and 356–412; these read RLFV…LKKT and LLKP…NLKM. Residues 417–513 are disordered; the sequence is SQEKKMAGQQ…QGMPSDLQPK (97 aa). A compositionally biased stretch (pro residues) spans 467-478; that stretch reads PVAPQPAGPPQP. Residues 482-498 show a composition bias toward polar residues; the sequence is ESPSFKSQMAKKSTGQL. Residues 595 to 666 form the MBD domain; that stretch reads HRGRNPLLTP…EMFCLDPYVL (72 aa). The 74-residue stretch at 728-801 folds into the Pre-SET domain; the sequence is VGCDCTDGCR…MCTNRLVQHG (74 aa). Zn(2+) is bound by residues C730, C732, C736, C742, C744, C782, C786, C788, and C793. Residues 804 to 1179 form the SET domain; that stretch reads VRLQLFKTQN…AGTELTWDYN (376 aa). S-adenosyl-L-methionine-binding positions include 814 to 816, D852, and Y854; that span reads KGW. 3 disordered regions span residues 892 to 944, 961 to 1057, and 1081 to 1108; these read LPAS…DTFV, RRQA…KTQA, and KSGGGGAGGGGSGPSHGHGGGGGDNGPK. Residues 918-940 are compositionally biased toward acidic residues; it reads DSSEESDDEKDDDSNEDDSDSSD. Basic and acidic residues-rich tracts occupy residues 966–976 and 983–997; these read GLKEESQDSKD and GEDRKPPHMPEETGK. A compositionally biased stretch (polar residues) spans 1003–1016; it reads WLTNQSSTSANQSV. 2 stretches are compositionally biased toward basic and acidic residues: residues 1020 to 1029 and 1046 to 1055; these read GGIKTEKKDV and DDNKEREKKT. Over residues 1082-1105 the composition is skewed to gly residues; that stretch reads SGGGGAGGGGSGPSHGHGGGGGDN. S-adenosyl-L-methionine contacts are provided by residues R1133 and 1136 to 1137; that span reads NH. 4 residues coordinate Zn(2+): C1139, C1192, C1194, and C1199. One can recognise a Post-SET domain in the interval 1188–1204; sequence KELLCCCGSTECRGRLL.

The protein belongs to the class V-like SAM-binding methyltransferase superfamily. Histone-lysine methyltransferase family. Suvar3-9 subfamily.

It localises to the nucleus. Its subcellular location is the chromosome. The catalysed reaction is L-lysyl(4)-[histone H3] + 3 S-adenosyl-L-methionine = N(6),N(6),N(6)-trimethyl-L-lysyl(4)-[histone H3] + 3 S-adenosyl-L-homocysteine + 3 H(+). In terms of biological role, histone methyltransferase that specifically trimethylates 'Lys-9' of histone H3. H3 'Lys-9' trimethylation represents a specific tag for epigenetic transcriptional repression by recruiting HP1 (CBX1, CBX3 and/or CBX5) proteins to methylated histones. Mainly functions in euchromatin regions, thereby playing a central role in the silencing of euchromatic genes. H3 'Lys-9' trimethylation is coordinated with DNA methylation. Plays a role in promoter hypermethylation and transcriptional silencing of tumor suppressor genes (TSGs) or other tumor-related genes. Also required to maintain a transcriptionally repressive state of genes in undifferentiated embryonic stem cells (ESCs). Associates at promoter regions of tumor suppressor genes (TSGs) leading to their gene silencing. The sequence is that of Histone-lysine N-methyltransferase SETDB1-B (setdb1b) from Danio rerio (Zebrafish).